The chain runs to 61 residues: Metallothionein-2 (61 aa).

The residue at position 1 (M1) is an N-acetylmethionine. A beta region spans residues 1-29 (MDPNCSCAAGDSCTCAGSCKCKECKCTSC). A divalent metal cation contacts are provided by C5, C7, C13, C15, C19, C21, C24, C26, C29, C33, C34, C36, C37, C41, C44, C48, C50, and C57. Residues 30–61 (KKSCCSCCPVGCAKCAQGCICKGASDKCSCCA) form an alpha region. Phosphoserine is present on S58. Residues C59 and C60 each coordinate a divalent metal cation.

The protein belongs to the metallothionein superfamily. Type 1 family. As to quaternary structure, interacts with EOLA1.

Metallothioneins have a high content of cysteine residues that bind various heavy metals; these proteins are transcriptionally regulated by both heavy metals and glucocorticoids. This is Metallothionein-2 from Homo sapiens (Human).